The following is a 256-amino-acid chain: Small ribosomal subunit protein uS2 (256 aa).

The protein belongs to the universal ribosomal protein uS2 family.

This chain is Small ribosomal subunit protein uS2, found in Streptococcus agalactiae serotype Ia (strain ATCC 27591 / A909 / CDC SS700).